The chain runs to 357 residues: Alanine racemase (357 aa).

Lysine 33 serves as the catalytic Proton acceptor; specific for D-alanine. An N6-(pyridoxal phosphate)lysine modification is found at lysine 33. Arginine 129 lines the substrate pocket. The Proton acceptor; specific for L-alanine role is filled by tyrosine 253. Methionine 301 contacts substrate.

It belongs to the alanine racemase family. It depends on pyridoxal 5'-phosphate as a cofactor.

The enzyme catalyses L-alanine = D-alanine. The protein operates within amino-acid biosynthesis; D-alanine biosynthesis; D-alanine from L-alanine: step 1/1. In terms of biological role, catalyzes the interconversion of L-alanine and D-alanine. May also act on other amino acids. This is Alanine racemase (alr) from Pseudomonas savastanoi pv. phaseolicola (strain 1448A / Race 6) (Pseudomonas syringae pv. phaseolicola (strain 1448A / Race 6)).